Reading from the N-terminus, the 539-residue chain is 3-methylmercaptopropionyl-CoA ligase (539 aa).

T185 contributes to the Mg(2+) binding site. The ATP site is built by H231, G303, H324, A325, and S329. E330 provides a ligand contact to Mg(2+). Residues Q359, D417, R432, and K523 each contribute to the ATP site.

This sequence belongs to the ATP-dependent AMP-binding enzyme family. Homodimer. Requires Mg(2+) as cofactor.

It catalyses the reaction 3-(methylsulfanyl)propanoate + ATP + CoA = 3-(methylsulfanyl)propanoyl-CoA + AMP + diphosphate. It functions in the pathway lipid metabolism; fatty acid metabolism. With respect to regulation, activated by LiCl and NH(4)Cl. Inhibited by dimethylsulfoniopropionate (DMSP). MMPA concentrations above 2 mM relieve the DMSP inhibition and 80% of activity is regained at an MMPA concentration of 8 mM. Its function is as follows. Involved in the assimilation of dimethylsulphoniopropionate (DMSP), an important compound in the fixation of carbon in marine phytoplankton. Catalyzes the ATP-dependent ligation of methylmercaptopropionate (MMPA) and CoA to yield methylmercaptopropionate-CoA (MMPA-CoA). It is also active with short-chain-fatty-acid (carboxylic acids up to six carbons in length). This is 3-methylmercaptopropionyl-CoA ligase from Ruegeria pomeroyi (strain ATCC 700808 / DSM 15171 / DSS-3) (Silicibacter pomeroyi).